The primary structure comprises 526 residues: Na(+)/H(+) antiporter NhaB (526 aa).

The next 12 helical transmembrane spans lie at 25-45, 52-72, 89-109, 130-164, 204-224, 242-262, 305-325, 350-370, 391-411, 448-468, 479-499, and 505-525; these read ILLF…AAGW, IFTL…LLAI, LVAN…IYFM, LSLA…FYAI, LMMH…VGEP, IRMA…CILV, AVIA…VGLI, QEAL…AVII, LALF…VFVG, VATP…LAPL, MALP…ELLL, and WFYQ…LPAL.

Belongs to the NhaB Na(+)/H(+) (TC 2.A.34) antiporter family.

The protein resides in the cell inner membrane. The catalysed reaction is 2 Na(+)(in) + 3 H(+)(out) = 2 Na(+)(out) + 3 H(+)(in). Functionally, na(+)/H(+) antiporter that extrudes sodium in exchange for external protons. The chain is Na(+)/H(+) antiporter NhaB from Aeromonas salmonicida (strain A449).